The chain runs to 571 residues: Potassium-transporting ATPase potassium-binding subunit (571 aa).

Helical transmembrane passes span 5-25, 64-84, 136-156, 179-199, 220-240, 254-274, 285-305, 330-350, 375-395, 421-441, 488-508, and 527-547; these read GWMQIALYGAVVLALVRPLGG, LAYAGAMILFNVAGFVLLYAL, GLTHQNFVSAASGMAVAVALI, LYVLLPLSTVLALFYVSQGMP, VGPVASQVAIKMLGTNGGGFF, LSNFLQMLSIFVIGAALTNVF, WAILAAMGLLFLAGVTVTYWA, FGIAASALFAVITTAASCGAV, IIGGVGAGLYGMLVFVVVAIF, MLGILCLPLMMLGFTAIATVV, LAIGMLVGRFFVKIPVLAIAG, and GGLFVGLLVGVVLIIGGLTFF.

The protein belongs to the KdpA family. The system is composed of three essential subunits: KdpA, KdpB and KdpC.

The protein resides in the cell inner membrane. Part of the high-affinity ATP-driven potassium transport (or Kdp) system, which catalyzes the hydrolysis of ATP coupled with the electrogenic transport of potassium into the cytoplasm. This subunit binds the periplasmic potassium ions and delivers the ions to the membrane domain of KdpB through an intramembrane tunnel. This chain is Potassium-transporting ATPase potassium-binding subunit, found in Methylorubrum extorquens (strain CM4 / NCIMB 13688) (Methylobacterium extorquens).